Here is a 230-residue protein sequence, read N- to C-terminus: Cytidylate kinase (230 aa).

10–18 contacts ATP; that stretch reads GPAGSGKST.

Belongs to the cytidylate kinase family. Type 1 subfamily.

The protein localises to the cytoplasm. It carries out the reaction CMP + ATP = CDP + ADP. The catalysed reaction is dCMP + ATP = dCDP + ADP. This chain is Cytidylate kinase, found in Leptospira borgpetersenii serovar Hardjo-bovis (strain JB197).